A 142-amino-acid polypeptide reads, in one-letter code: Large ribosomal subunit protein uL11 (142 aa).

Belongs to the universal ribosomal protein uL11 family. In terms of assembly, part of the ribosomal stalk of the 50S ribosomal subunit. Interacts with L10 and the large rRNA to form the base of the stalk. L10 forms an elongated spine to which L12 dimers bind in a sequential fashion forming a multimeric L10(L12)X complex. In terms of processing, one or more lysine residues are methylated.

In terms of biological role, forms part of the ribosomal stalk which helps the ribosome interact with GTP-bound translation factors. The sequence is that of Large ribosomal subunit protein uL11 from Thermobifida fusca (strain YX).